The chain runs to 241 residues: Small ribosomal subunit protein uS3 (241 aa).

A KH type-2 domain is found at I39–E108. The segment at S215 to K241 is disordered. The span at N232–K241 shows a compositional bias: low complexity.

This sequence belongs to the universal ribosomal protein uS3 family. In terms of assembly, part of the 30S ribosomal subunit. Forms a tight complex with proteins S10 and S14.

Functionally, binds the lower part of the 30S subunit head. Binds mRNA in the 70S ribosome, positioning it for translation. The sequence is that of Small ribosomal subunit protein uS3 from Mesoplasma florum (Acholeplasma florum).